Here is a 411-residue protein sequence, read N- to C-terminus: Dihydrosphingosine 1-phosphate phosphatase C823.11 (411 aa).

Over 1–74 (MVHKKKNVDI…LDVYFMYTAT (74 aa)) the chain is Lumenal. The helical transmembrane segment at 75 to 95 (LGTHVFFMLALPIFFWSGCIY) threads the bilayer. Residues 96-99 (YTLD) lie on the Cytoplasmic side of the membrane. Residues 100-120 (ITQLFAAGVYFSGCIKDYFCL) traverse the membrane as a helical segment. Residues 115–123 (KDYFCLPRP) form a phosphatase sequence motif I region. Over 121–170 (PRPRSPPMVRLTLSSDAEYEYGFPSTHTTNAMATGFYSLFLLLSMSDSMS) the chain is Lumenal. The segment at 144 to 147 (PSTH) is phosphatase sequence motif II. Residue His147 is the Proton donor of the active site. The chain crosses the membrane as a helical span at residues 171–191 (SISYYFLLSLVLLYIASISLG). The interval 191-202 (GRIYCGMHGFMD) is phosphatase sequence motif III. Topologically, residues 192-195 (RIYC) are cytoplasmic. A helical transmembrane segment spans residues 196–216 (GMHGFMDVSTGTILGVTLAIF). Catalysis depends on His198, which acts as the Nucleophile. The Lumenal segment spans residues 217–233 (QWKYADFFHNVWSSSST). A helical transmembrane segment spans residues 234 to 254 (SVPILSVVLALFFIWFHPQPA). Topologically, residues 255–259 (ERCIC) are cytoplasmic. The chain crosses the membrane as a helical span at residues 260–280 (LEDSISFISVIMGIDLGTWFA). Over 281–293 (SPESLSHLHDNLN) the chain is Lumenal. A helical transmembrane segment spans residues 294 to 314 (SYFLLKFFVRVLFGVCMILIW). Topologically, residues 315–387 (KSFAKQALLA…VRFDIETIAR (73 aa)) are cytoplasmic. Residues 388–408 (IIVYSGIGFLCTYFAPKVFLK) form a helical membrane-spanning segment. Residues 409 to 411 (WKI) lie on the Lumenal side of the membrane.

It belongs to the type 2 lipid phosphate phosphatase family.

The protein localises to the endoplasmic reticulum membrane. Dihydrosphingosine 1-phosphate phosphatase required for efficient ceramide synthesis from exogenous sphingoid bases. Involved in endocytosis and calcium-mediated signaling. The chain is Dihydrosphingosine 1-phosphate phosphatase C823.11 from Schizosaccharomyces pombe (strain 972 / ATCC 24843) (Fission yeast).